A 904-amino-acid chain; its full sequence is Alanine--tRNA ligase (904 aa).

Zn(2+) contacts are provided by His584, His588, Cys687, and His691.

It belongs to the class-II aminoacyl-tRNA synthetase family. Requires Zn(2+) as cofactor.

The protein resides in the cytoplasm. It catalyses the reaction tRNA(Ala) + L-alanine + ATP = L-alanyl-tRNA(Ala) + AMP + diphosphate. In terms of biological role, catalyzes the attachment of alanine to tRNA(Ala) in a two-step reaction: alanine is first activated by ATP to form Ala-AMP and then transferred to the acceptor end of tRNA(Ala). Also edits incorrectly charged Ser-tRNA(Ala) and Gly-tRNA(Ala) via its editing domain. The polypeptide is Alanine--tRNA ligase (Mycobacterium bovis (strain ATCC BAA-935 / AF2122/97)).